Reading from the N-terminus, the 446-residue chain is N-succinylarginine dihydrolase (446 aa).

Substrate contacts are provided by residues 19–28 (AGLSFGNVAS), N110, and 137–138 (HR). The active site involves E174. R213 contacts substrate. The active site involves H249. Residues D251 and N364 each contribute to the substrate site. The Nucleophile role is filled by C370.

It belongs to the succinylarginine dihydrolase family. In terms of assembly, homodimer.

It catalyses the reaction N(2)-succinyl-L-arginine + 2 H2O + 2 H(+) = N(2)-succinyl-L-ornithine + 2 NH4(+) + CO2. It functions in the pathway amino-acid degradation; L-arginine degradation via AST pathway; L-glutamate and succinate from L-arginine: step 2/5. Its function is as follows. Catalyzes the hydrolysis of N(2)-succinylarginine into N(2)-succinylornithine, ammonia and CO(2). This Burkholderia lata (strain ATCC 17760 / DSM 23089 / LMG 22485 / NCIMB 9086 / R18194 / 383) protein is N-succinylarginine dihydrolase.